The primary structure comprises 264 residues: Spermidine/putrescine transport system permease protein PotC (264 aa).

6 helical membrane passes run 10–30 (FMTA…VNSF), 66–86 (MAVF…VALY), 109–129 (IVMA…LGFW), 131–151 (LLFS…YSRL), 176–196 (IILP…FTLS), and 232–252 (ALAT…QLIA). The ABC transmembrane type-1 domain occupies 60-248 (AQHSLTMAVF…VLSLVMVIAS (189 aa)).

It belongs to the binding-protein-dependent transport system permease family. CysTW subfamily.

It is found in the cell inner membrane. Its function is as follows. Required for the activity of the bacterial periplasmic transport system of putrescine and spermidine. The chain is Spermidine/putrescine transport system permease protein PotC (potC) from Shigella flexneri.